The following is a 263-amino-acid chain: Small ribosomal subunit protein eS4, Y isoform 1 (263 aa).

One can recognise an S4 RNA-binding domain in the interval 42 to 104 (LPLIVFLRNR…TGEHFRLVYD (63 aa)).

The protein belongs to the eukaryotic ribosomal protein eS4 family.

The sequence is that of Small ribosomal subunit protein eS4, Y isoform 1 (RPS4Y1) from Homo sapiens (Human).